A 225-amino-acid chain; its full sequence is Uracil-DNA glycosylase (225 aa).

Residue Asp65 is the Proton acceptor of the active site.

This sequence belongs to the uracil-DNA glycosylase (UDG) superfamily. UNG family.

It localises to the cytoplasm. The catalysed reaction is Hydrolyzes single-stranded DNA or mismatched double-stranded DNA and polynucleotides, releasing free uracil.. Functionally, excises uracil residues from the DNA which can arise as a result of misincorporation of dUMP residues by DNA polymerase or due to deamination of cytosine. The sequence is that of Uracil-DNA glycosylase from Bacillus licheniformis (strain ATCC 14580 / DSM 13 / JCM 2505 / CCUG 7422 / NBRC 12200 / NCIMB 9375 / NCTC 10341 / NRRL NRS-1264 / Gibson 46).